Here is a 233-residue protein sequence, read N- to C-terminus: Large ribosomal subunit protein uL1 (233 aa).

It belongs to the universal ribosomal protein uL1 family. In terms of assembly, part of the 50S ribosomal subunit.

Its function is as follows. Binds directly to 23S rRNA. The L1 stalk is quite mobile in the ribosome, and is involved in E site tRNA release. Functionally, protein L1 is also a translational repressor protein, it controls the translation of the L11 operon by binding to its mRNA. The chain is Large ribosomal subunit protein uL1 from Parvibaculum lavamentivorans (strain DS-1 / DSM 13023 / NCIMB 13966).